The chain runs to 732 residues: Probable zinc transporter cis4 (732 aa).

Transmembrane regions (helical) follow at residues 52–72, 79–99, 111–131, 163–183, 189–209, 219–239, 240–260, 268–288, 350–370, 380–400, 415–435, and 453–473; these read ETLG…GLEV, FYLI…LGIY, VIIA…LGTL, YIAF…LGYF, VFYA…FYLV, LAFL…VLPL, GTIN…IFCI, IQFY…SAII, IFYF…YGLW, AIHM…TTLA, IEAL…FSIV, and LLLV…AFNH. A disordered region spans residues 526-547; that stretch reads HVSQHEHTHENSQEHHHEHNHN. A run of 2 helical transmembrane segments spans residues 586 to 606 and 615 to 635; these read IFLH…STIL and FDPL…LPLI.

It belongs to the cation diffusion facilitator (CDF) transporter (TC 2.A.4) family. SLC30A subfamily. In terms of assembly, interacts with zrg17.

The protein resides in the endoplasmic reticulum membrane. Its subcellular location is the golgi apparatus. It is found in the cis-Golgi network membrane. Probable zinc transporter involved in Golgi membrane trafficking through the regulation of zinc homeostasis. This Schizosaccharomyces pombe (strain 972 / ATCC 24843) (Fission yeast) protein is Probable zinc transporter cis4 (cis4).